Reading from the N-terminus, the 126-residue chain is Heavy metal-associated isoprenylated plant protein 14 (126 aa).

Residues Ala-3–Asp-69 enclose the HMA domain. A Cysteine methyl ester modification is found at Cys-123. Residue Cys-123 is the site of S-farnesyl cysteine attachment. Residues Val-124–Met-126 constitute a propeptide, removed in mature form.

The protein belongs to the HIPP family.

Probable heavy-metal-binding protein. This chain is Heavy metal-associated isoprenylated plant protein 14, found in Arabidopsis thaliana (Mouse-ear cress).